The primary structure comprises 506 residues: 7,8-dihydro-6-hydroxymethylpterin dimethyltransferase (506 aa).

The [4Fe-4S] cluster site is built by C73, C77, C80, C98, C102, and C105. Positions 82-300 (NHKSTTILAN…FIKLVEEQTD (219 aa)) constitute a Radical SAM core domain.

Belongs to the radical SAM superfamily. [4Fe-4S] cluster serves as cofactor. It depends on S-adenosyl-L-methionine as a cofactor.

The protein operates within cofactor biosynthesis; 5,6,7,8-tetrahydromethanopterin biosynthesis. Functionally, is responsible for the addition of methyl groups at C-7 and C-9 of the pterin ring during methanopterin (MPT) biosynthesis. Catalyzes methylation of 7,8-dihydro-6-hydroxymethylpterin, likely using methylenetetrahydromethanopterin as a methyl group donor, via a radical-based mechanism. The protein is 7,8-dihydro-6-hydroxymethylpterin dimethyltransferase of Methanocaldococcus jannaschii (strain ATCC 43067 / DSM 2661 / JAL-1 / JCM 10045 / NBRC 100440) (Methanococcus jannaschii).